A 704-amino-acid polypeptide reads, in one-letter code: DNA ligase (704 aa).

Residues 43-47 (DADYD), 92-93 (SL), and glutamate 124 contribute to the NAD(+) site. Catalysis depends on lysine 126, which acts as the N6-AMP-lysine intermediate. 4 residues coordinate NAD(+): arginine 147, glutamate 182, lysine 298, and lysine 322. Residues cysteine 427, cysteine 430, cysteine 445, and cysteine 451 each coordinate Zn(2+). Residues 625–704 (PVESPIAGKI…DAWLRLIGDA (80 aa)) enclose the BRCT domain.

Belongs to the NAD-dependent DNA ligase family. LigA subfamily. Mg(2+) is required as a cofactor. Mn(2+) serves as cofactor.

The enzyme catalyses NAD(+) + (deoxyribonucleotide)n-3'-hydroxyl + 5'-phospho-(deoxyribonucleotide)m = (deoxyribonucleotide)n+m + AMP + beta-nicotinamide D-nucleotide.. In terms of biological role, DNA ligase that catalyzes the formation of phosphodiester linkages between 5'-phosphoryl and 3'-hydroxyl groups in double-stranded DNA using NAD as a coenzyme and as the energy source for the reaction. It is essential for DNA replication and repair of damaged DNA. The chain is DNA ligase from Cereibacter sphaeroides (strain ATCC 17025 / ATH 2.4.3) (Rhodobacter sphaeroides).